Reading from the N-terminus, the 671-residue chain is Transcriptional regulator Kaiso (671 aa).

The segment at 1–103 (MESRKLISAT…RADLLDELIK (103 aa)) is interaction with NCOR1. A self-association region spans residues 1-136 (MESRKLISAT…SGTEQDGTAE (136 aa)). The 63-residue stretch at 32–94 (CDVTVIVEDR…IYSSKVVRVR (63 aa)) folds into the BTB domain. The segment covering 127-144 (SGTEQDGTAETLPSSSSD) has biased composition (polar residues). Residues 127-161 (SGTEQDGTAETLPSSSSDKSLDMEKSKDEAQDNGA) are disordered. The segment covering 145–156 (KSLDMEKSKDEA) has biased composition (basic and acidic residues). Residues Lys-151 and Lys-153 each participate in a glycyl lysine isopeptide (Lys-Gly) (interchain with G-Cter in SUMO2) cross-link. Thr-251 bears the Phosphothreonine mark. An interaction with CBFA2T3 region spans residues 298–571 (LPNHMSSSVN…FMSSHIKSVH (274 aa)). The interval 332–365 (IIDDDDDIISSSPDSAVSNTSLVPQADNSKSTTL) is disordered. Positions 347–365 (AVSNTSLVPQADNSKSTTL) are enriched in polar residues. Residues Lys-388, Lys-405, Lys-412, and Lys-447 each participate in a glycyl lysine isopeptide (Lys-Gly) (interchain with G-Cter in SUMO2) cross-link. Basic and acidic residues predominate over residues 451–461 (DGGEAKLDNEL). Positions 451–474 (DGGEAKLDNELPKTSGSEPPNKRM) are disordered. Residues 452–671 (GGEAKLDNEL…EFEFIIPESY (220 aa)) are interaction with CTNND1. Residues Lys-463, Lys-472, and Lys-477 each participate in a glycyl lysine isopeptide (Lys-Gly) (interchain with G-Cter in SUMO2) cross-link. A Nuclear localization signal motif is present at residues 469 to 478 (PPNKRMKVKH). 3 consecutive C2H2-type zinc fingers follow at residues 492–514 (YICIVCKRSYVCLTSLRRHFNIH), 520–542 (YQCRYCDKVFPLAEYRTKHEIHH), and 548–571 (YQCLTCGKSFINYQFMSSHIKSVH). The segment at 512 to 637 (NIHSWEKKYQ…TSTPPQNKST (126 aa)) is required for DNA-binding. Residues Lys-537, Lys-568, Lys-580, Lys-609, and Lys-616 each participate in a glycyl lysine isopeptide (Lys-Gly) (interchain with G-Cter in SUMO2) cross-link.

As to quaternary structure, interacts with NCOR1. Self-associates. Interacts with CTNND1, and this interaction inhibits binding to both methylated and non-methylated DNA. Interacts with CTNND2. Interacts with KPNA2/RCH1, which may mediate nuclear import of this protein. Interacts with CBFA2T3. As to expression, expressed in brain, heart, kidney, liver, lung, neuromuscular junctions, skeletal muscle, spleen and testis.

The protein localises to the nucleus. Transcriptional regulator with bimodal DNA-binding specificity. Binds to methylated CpG dinucleotides in the consensus sequence 5'-CGCG-3' and also binds to the non-methylated consensus sequence 5'-CTGCNA-3' also known as the consensus kaiso binding site (KBS). May recruit the N-CoR repressor complex to promote histone deacetylation and the formation of repressive chromatin structures in target gene promoters. Contributes to the repression of target genes of the Wnt signaling pathway. May also activate transcription of a subset of target genes by the recruitment of CTNND2. Represses expression of MMP7 in conjunction with transcriptional corepressors CBFA2T3, CBFA2T2 and RUNX1T1. This Mus musculus (Mouse) protein is Transcriptional regulator Kaiso (Zbtb33).